The sequence spans 66 residues: Large ribosomal subunit protein bL31 (66 aa).

Residues Cys-16, Cys-18, Cys-36, and Cys-39 each contribute to the Zn(2+) site.

It belongs to the bacterial ribosomal protein bL31 family. Type A subfamily. Part of the 50S ribosomal subunit. Zn(2+) serves as cofactor.

Its function is as follows. Binds the 23S rRNA. The protein is Large ribosomal subunit protein bL31 of Bacillus licheniformis (strain ATCC 14580 / DSM 13 / JCM 2505 / CCUG 7422 / NBRC 12200 / NCIMB 9375 / NCTC 10341 / NRRL NRS-1264 / Gibson 46).